A 330-amino-acid polypeptide reads, in one-letter code: MFSVVLGAAVAFFVTVTLGSSFIRFLQTRKFGQYVREEGPETHLIKAGTPTMGGVLMLMGLVAGLAVVARPNPATFSVLLIVAATAGVGLYDDWQKVSKRHSEGLSARYKFLLLSLVVVLADVMALRYVGVTQNVIVPGFSNNLVLGPGVVGVGLFSVLMLFVIVGTTNAVNLTDGLDGLAAGAGGIALLTYTAIAFLERQYDLAIICGAMVGAIIGFLWYNSHPAEIFMGDTGSLAIGGVLSAAAILTKTEMLLPVIGGLFVIVALSVMIQVVVFKLTRRRVFKMAPIHHHFEMLGWAENKVVVRFWIVQSAFSALGFLMYYFFLYSSV.

10 helical membrane passes run 3-23, 49-69, 71-91, 111-131, 145-165, 179-199, 204-224, 228-248, 256-276, and 307-327; these read SVVL…SSFI, TPTM…AVVA, PNPA…VGLY, FLLL…YVGV, VLGP…FVIV, GLAA…AFLE, LAII…YNSH, IFMG…AAIL, PVIG…VVVF, and FWIV…FFLY.

It belongs to the glycosyltransferase 4 family. MraY subfamily. It depends on Mg(2+) as a cofactor.

Its subcellular location is the cell membrane. It catalyses the reaction UDP-N-acetyl-alpha-D-muramoyl-L-alanyl-gamma-D-glutamyl-meso-2,6-diaminopimeloyl-D-alanyl-D-alanine + di-trans,octa-cis-undecaprenyl phosphate = di-trans,octa-cis-undecaprenyl diphospho-N-acetyl-alpha-D-muramoyl-L-alanyl-D-glutamyl-meso-2,6-diaminopimeloyl-D-alanyl-D-alanine + UMP. It participates in cell wall biogenesis; peptidoglycan biosynthesis. In terms of biological role, catalyzes the initial step of the lipid cycle reactions in the biosynthesis of the cell wall peptidoglycan: transfers peptidoglycan precursor phospho-MurNAc-pentapeptide from UDP-MurNAc-pentapeptide onto the lipid carrier undecaprenyl phosphate, yielding undecaprenyl-pyrophosphoryl-MurNAc-pentapeptide, known as lipid I. This is Phospho-N-acetylmuramoyl-pentapeptide-transferase from Rubrobacter xylanophilus (strain DSM 9941 / JCM 11954 / NBRC 16129 / PRD-1).